We begin with the raw amino-acid sequence, 43 residues long: Cytochrome b559 subunit beta (43 aa).

Residues 18-34 (WLAIHGLAIPTVFFFGA) form a helical membrane-spanning segment. His-22 provides a ligand contact to heme.

This sequence belongs to the PsbE/PsbF family. As to quaternary structure, heterodimer of an alpha subunit and a beta subunit. PSII is composed of 1 copy each of membrane proteins PsbA, PsbB, PsbC, PsbD, PsbE, PsbF, PsbH, PsbI, PsbJ, PsbK, PsbL, PsbM, PsbT, PsbY, PsbZ, Psb30/Ycf12, at least 3 peripheral proteins of the oxygen-evolving complex and a large number of cofactors. It forms dimeric complexes. Requires heme b as cofactor.

The protein localises to the plastid. Its subcellular location is the chloroplast thylakoid membrane. Its function is as follows. This b-type cytochrome is tightly associated with the reaction center of photosystem II (PSII). PSII is a light-driven water:plastoquinone oxidoreductase that uses light energy to abstract electrons from H(2)O, generating O(2) and a proton gradient subsequently used for ATP formation. It consists of a core antenna complex that captures photons, and an electron transfer chain that converts photonic excitation into a charge separation. The protein is Cytochrome b559 subunit beta of Cyanidium caldarium (Red alga).